Consider the following 162-residue polypeptide: SsrA-binding protein (162 aa).

It belongs to the SmpB family.

The protein localises to the cytoplasm. Functionally, required for rescue of stalled ribosomes mediated by trans-translation. Binds to transfer-messenger RNA (tmRNA), required for stable association of tmRNA with ribosomes. tmRNA and SmpB together mimic tRNA shape, replacing the anticodon stem-loop with SmpB. tmRNA is encoded by the ssrA gene; the 2 termini fold to resemble tRNA(Ala) and it encodes a 'tag peptide', a short internal open reading frame. During trans-translation Ala-aminoacylated tmRNA acts like a tRNA, entering the A-site of stalled ribosomes, displacing the stalled mRNA. The ribosome then switches to translate the ORF on the tmRNA; the nascent peptide is terminated with the 'tag peptide' encoded by the tmRNA and targeted for degradation. The ribosome is freed to recommence translation, which seems to be the essential function of trans-translation. In Granulibacter bethesdensis (strain ATCC BAA-1260 / CGDNIH1), this protein is SsrA-binding protein.